We begin with the raw amino-acid sequence, 207 residues long: Early nodulin-like protein 11 (207 aa).

An N-terminal signal peptide occupies residues 1-24 (MVSLISIVSVVFLLFTTFYHFGEA). The 106-residue stretch at 25–130 (RIINVGGSLD…GEKVTVVVQS (106 aa)) folds into the Phytocyanin domain. Asparagine 43 is a glycosylation site (N-linked (GlcNAc...) asparagine). A disulfide bridge links cysteine 83 with cysteine 118. Positions 129–179 (QSPNHPKPGPAAVTPTLPPKPSTTPAAPAPAPPTPSPKSSTSTMAPAPAPA) are disordered. Pro residues predominate over residues 144-164 (TLPPKPSTTPAAPAPAPPTPS). A compositionally biased stretch (low complexity) spans 165-179 (PKSSTSTMAPAPAPA). A lipid anchor (GPI-anchor amidated serine) is attached at serine 181. A propeptide spans 182–207 (SAVGLVAGNGIFWASTLVAVIGLAFA) (removed in mature form).

Belongs to the early nodulin-like (ENODL) family. As to expression, confined to flowers and siliques.

Its subcellular location is the cell membrane. In terms of biological role, may act as a carbohydrate transporter. Required, together with ENODL11, ENODL12, ENODL13, ENODL14 and ENODL15, for male-female communication and pollen tube reception and burst at the synergid cell surface of the female gametophyte. This Arabidopsis thaliana (Mouse-ear cress) protein is Early nodulin-like protein 11.